The primary structure comprises 813 residues: MAWPCITRACCIARFWNQLDKADIAVPLVFTKYSEATEHPGAPPQPPPPQQQAQPALAPPSARAVAIETQPAQGELDAVARATGPAPGPTGEREPAAGPGRSGPGPGLGSGSTSGPADSVMRQDYRAWKVQRPEPSCRPRSEYQPSDAPFERETQYQKDFRAWPLPRRGDHPWIPKPVQISAASQASAPILGAPKRRPQSQERWPVQAAAEAREQEAAPGGAGGLAAGKASGADERDTRRKAGPAWIVRRAEGLGHEQTPLPAAQAQVQATGPEAGRGRAAADALNRQIREEVASAVSSSYRNEFRAWTDIKPVKPIKAKPQYKPPDDKMVHETSYSAQFKGEASKPTTADNKVIDRRRIRSLYSEPFKEPPKVEKPSVQSSKPKKTSASHKPTRKAKDKQAVSGQAAKKKSAEGPSTTKPDDKEQSKEMNNKLAEAKESLAQPVSDSSKTQGPVATEPDKDQGSVVPGLLKGQGPMVQEPLKKQGSVVPGPPKDLGPMIPLPVKDQDHTVPEPLKNESPVISAPVKDQGPSVPVPPKNQSPMVPAKVKDQGSVVPESLKDQGPRIPEPVKNQAPMVPAPVKDEGPMVSASVKDQGPMVSAPVKDQGPIVPAPVKGEGPIVPAPVKDEGPMVSAPIKDQDPMVPEHPKDESAMATAPIKNQGSMVSEPVKNQGLVVSGPVKDQDVVVPEHAKVHDSAVVAPVKNQGPVVPESVKNQDPILPVLVKDQGPTVLQPPKNQGRIVPEPLKNQVPIVPVPLKDQDPLVPVPAKDQGPAVPEPLKTQGPRDPQLPTVSPLPRVMIPTAPHTEYIESSP.

Residues cysteine 5, cysteine 10, and cysteine 11 are each lipidated (S-palmitoyl cysteine). Disordered regions lie at residues alanine 36–aspartate 283, valine 314–serine 651, and proline 756–proline 813. Pro residues predominate over residues glycine 41 to glutamine 50. The span at glutamine 51 to alanine 62 shows a compositional bias: low complexity. Gly residues predominate over residues glycine 100–serine 112. Serine 102 carries the post-translational modification Phosphoserine. Positions aspartate 118–serine 141 are mn 1. Basic and acidic residues predominate over residues methionine 121–serine 141. Residues arginine 126–arginine 140 form a calmodulin-binding region. Tyrosine 143 carries the post-translational modification Phosphotyrosine. The span at proline 149 to tryptophan 173 shows a compositional bias: basic and acidic residues. Residues glutamate 153–lysine 176 form a mn 2 region. The interval alanine 162–lysine 176 is calmodulin-binding. Serine 187 carries the post-translational modification Phosphoserine. 4 calmodulin-binding regions span residues proline 189–arginine 203, arginine 306–lysine 320, arginine 357–proline 371, and proline 384–lysine 398. Residues serine 298–proline 321 are mn 3. Over residues proline 367–lysine 376 the composition is skewed to basic and acidic residues. A compositionally biased stretch (basic residues) spans lysine 383–lysine 398. Residues lysine 420–glutamate 439 show a composition bias toward basic and acidic residues. Polar residues predominate over residues glutamine 443–proline 454. Positions lysine 637 to serine 651 are enriched in basic and acidic residues. Phosphoserine is present on serine 812.

This sequence belongs to the STOP family. Interacts with calmodulin (via C-terminus); the interaction is dependent on Ca(2+). Interacts (via C-terminus) with TMEM106B (via N-terminus). Interacts with ZDHHC17 (via ANK repeats). Interacts with ZDHHC13 (via ANK repeats). Palmitoylated. Probably depalmitoylated by ABHD17A, ABHD17B and ABHD17C. During neuronal polarization, palmitoylation and depalmitoylation cycles regulate MAP6 shuttling between secretory vesicles and microtubules, and its polarized distribution in the axon. As to expression, expressed in brain (at protein level). Expressed in spinal cord. Isoform 2 expression is up-regulated in the prefrontal cortex (Brodmann's area 46) of patients with schizophrenia (postmortem brain study).

Its subcellular location is the cytoplasm. The protein localises to the cytoskeleton. It is found in the golgi apparatus. The protein resides in the cell projection. It localises to the axon. Its subcellular location is the dendrite. The protein localises to the cytoplasmic vesicle. It is found in the secretory vesicle membrane. Functionally, involved in microtubule stabilization in many cell types, including neuronal cells. Specifically has microtubule cold stabilizing activity. Involved in dendrite morphogenesis and maintenance by regulating lysosomal trafficking via its interaction with TMEM106B. Regulates KIF5A-mediated axonal cargo transport. Regulates axonal growth during neuron polarization. The protein is Microtubule-associated protein 6 (MAP6) of Homo sapiens (Human).